Here is a 235-residue protein sequence, read N- to C-terminus: UPF0702 transmembrane protein YdfS (235 aa).

Transmembrane regions (helical) follow at residues 32-52 and 60-80; these read MTIF…GLAY and NMAI…FLSI.

Belongs to the UPF0702 family.

The protein resides in the cell membrane. The polypeptide is UPF0702 transmembrane protein YdfS (ydfS) (Bacillus subtilis (strain 168)).